Consider the following 452-residue polypeptide: THO complex subunit 5A (452 aa).

Belongs to the THOC5 family. Component of the THO complex, which is composed of THO1, THO2, THO3, THO5, THO6 and THO7.

It is found in the nucleus. In terms of biological role, acts as a component of the THO subcomplex of the TREX complex which is thought to couple mRNA transcription, processing and nuclear export. This Arabidopsis thaliana (Mouse-ear cress) protein is THO complex subunit 5A (THO5A).